The following is a 533-amino-acid chain: RNA end formation protein 2 (533 aa).

Disordered stretches follow at residues 187–254 (SNST…SSMK), 260–279 (LFNK…SKKK), and 321–344 (SSST…PLKK). A compositionally biased stretch (basic and acidic residues) spans 206-222 (KIKDSEKEKEKEKDKSK). Residues 242-252 (SSPSPTASTSS) show a composition bias toward low complexity. The span at 321–338 (SSSTSGSSTTTVATPASS) shows a compositional bias: low complexity.

As to quaternary structure, interacts with FIR1. Component of the cleavage and polyadenylation factor (CPF) complex, which is composed of PTI1, SYC1, SSU72, GLC7, MPE1, REF2, PFS2, PTA1, YSH1/BRR5, SWD2, CFT2/YDH1, YTH1, CFT1/YHH1, FIP1 and PAP1. Component of the APT complex, which is a subcomplex of CPF, and is composed of PTI1, SYC1, SSU72, GLC7, REF2, PTA1 and SWD2.

The protein localises to the nucleus. RNA-binding component of the cleavage and polyadenylation factor (CPF) complex, which plays a key role in polyadenylation-dependent pre-mRNA 3'-end formation and cooperates with cleavage factors including the CFIA complex and NAB4/CFIB. Negative regulator of poly(A) synthesis. Component of the APT complex, which may be involved in polyadenylation-independent transcript 3'-end formation. REF2 is required for 3'-end formation of snoRNAs. This chain is RNA end formation protein 2 (REF2), found in Saccharomyces cerevisiae (strain ATCC 204508 / S288c) (Baker's yeast).